Here is a 71-residue protein sequence, read N- to C-terminus: DNA-directed RNA polymerase subunit omega (71 aa).

This sequence belongs to the RNA polymerase subunit omega family. As to quaternary structure, the RNAP catalytic core consists of 2 alpha, 1 beta, 1 beta' and 1 omega subunit. When a sigma factor is associated with the core the holoenzyme is formed, which can initiate transcription.

The enzyme catalyses RNA(n) + a ribonucleoside 5'-triphosphate = RNA(n+1) + diphosphate. Its function is as follows. Promotes RNA polymerase assembly. Latches the N- and C-terminal regions of the beta' subunit thereby facilitating its interaction with the beta and alpha subunits. This is DNA-directed RNA polymerase subunit omega from Aromatoleum aromaticum (strain DSM 19018 / LMG 30748 / EbN1) (Azoarcus sp. (strain EbN1)).